The sequence spans 538 residues: Putative cysteine ligase BshC (538 aa).

The stretch at 460 to 484 (KINEQIELLERMLKRNVEKKHEVEL) forms a coiled coil.

It belongs to the BshC family.

In terms of biological role, involved in bacillithiol (BSH) biosynthesis. May catalyze the last step of the pathway, the addition of cysteine to glucosamine malate (GlcN-Mal) to generate BSH. In Bacillus cereus (strain AH820), this protein is Putative cysteine ligase BshC.